Reading from the N-terminus, the 334-residue chain is L-lactate dehydrogenase B chain (334 aa).

Residues 30–58 (GQVGMACAVSILLRDLCDELALVDVMEDR) and arginine 100 contribute to the NAD(+) site. Substrate is bound by residues arginine 107, asparagine 139, and arginine 170. Asparagine 139 contacts NAD(+). Histidine 194 serves as the catalytic Proton acceptor. Threonine 249 contacts substrate.

Belongs to the LDH/MDH superfamily. LDH family. In terms of assembly, homotetramer.

The protein localises to the cytoplasm. The enzyme catalyses (S)-lactate + NAD(+) = pyruvate + NADH + H(+). It functions in the pathway fermentation; pyruvate fermentation to lactate; (S)-lactate from pyruvate: step 1/1. Interconverts simultaneously and stereospecifically pyruvate and lactate with concomitant interconversion of NADH and NAD(+). In Fundulus heteroclitus (Killifish), this protein is L-lactate dehydrogenase B chain (ldhb).